Consider the following 447-residue polypeptide: N-succinylarginine dihydrolase (447 aa).

Substrate-binding positions include 19–28 (AGLSFGNEAS), asparagine 110, and 137–138 (HR). Glutamate 174 is an active-site residue. Arginine 214 lines the substrate pocket. Histidine 250 is a catalytic residue. Residues aspartate 252 and asparagine 365 each contribute to the substrate site. Cysteine 371 (nucleophile) is an active-site residue.

Belongs to the succinylarginine dihydrolase family. In terms of assembly, homodimer.

It catalyses the reaction N(2)-succinyl-L-arginine + 2 H2O + 2 H(+) = N(2)-succinyl-L-ornithine + 2 NH4(+) + CO2. It functions in the pathway amino-acid degradation; L-arginine degradation via AST pathway; L-glutamate and succinate from L-arginine: step 2/5. Its function is as follows. Catalyzes the hydrolysis of N(2)-succinylarginine into N(2)-succinylornithine, ammonia and CO(2). The chain is N-succinylarginine dihydrolase from Acinetobacter baumannii (strain SDF).